The sequence spans 552 residues: Serine protease 53 (552 aa).

A signal peptide spans 1–23 (MRQSWRPELLIVGAVVVIEGLQA). Peptidase S1 domains lie at 24-273 (AQRA…AHVH) and 294-525 (VACG…NLDW). A disordered region spans residues 27–46 (ACGQRGPGPPEPQEGNTLPG). Residues cysteine 62 and cysteine 78 are joined by a disulfide bond. Active-site charge relay system residues include histidine 77 and aspartate 128. 4 disulfides stabilise this stretch: cysteine 158–cysteine 230, cysteine 187–cysteine 209, cysteine 220–cysteine 249, and cysteine 326–cysteine 342. Catalysis depends on charge relay system residues serine 224, histidine 341, and aspartate 382. 2 disulfides stabilise this stretch: cysteine 443-cysteine 463 and cysteine 473-cysteine 501. The active-site Charge relay system is the serine 477.

Belongs to the peptidase S1 family.

The protein localises to the secreted. In vitro can degrade the fibrinogen alpha chain of as well as pro-urokinase-type plasminogen activator. The protein is Serine protease 53 (Prss53) of Mus musculus (Mouse).